Consider the following 180-residue polypeptide: Adenine phosphoribosyltransferase (180 aa).

It belongs to the purine/pyrimidine phosphoribosyltransferase family. Homodimer.

The protein resides in the cytoplasm. It catalyses the reaction AMP + diphosphate = 5-phospho-alpha-D-ribose 1-diphosphate + adenine. It participates in purine metabolism; AMP biosynthesis via salvage pathway; AMP from adenine: step 1/1. In terms of biological role, catalyzes a salvage reaction resulting in the formation of AMP, that is energically less costly than de novo synthesis. The polypeptide is Adenine phosphoribosyltransferase (Agrobacterium fabrum (strain C58 / ATCC 33970) (Agrobacterium tumefaciens (strain C58))).